Consider the following 398-residue polypeptide: Elongation factor Tu (398 aa).

One can recognise a tr-type G domain in the interval 10–207 (KPHVNIGTIG…TVDSYIPEPE (198 aa)). Positions 19–26 (GHVDHGKT) are G1. 19–26 (GHVDHGKT) is a binding site for GTP. Position 26 (threonine 26) interacts with Mg(2+). The G2 stretch occupies residues 63–67 (GITIN). A G3 region spans residues 84–87 (DAPG). Residues 84-88 (DAPGH) and 139-142 (NKVD) each bind GTP. Residues 139-142 (NKVD) are G4. Residues 177-179 (SAL) are G5.

This sequence belongs to the TRAFAC class translation factor GTPase superfamily. Classic translation factor GTPase family. EF-Tu/EF-1A subfamily. Monomer.

The protein resides in the cytoplasm. It catalyses the reaction GTP + H2O = GDP + phosphate + H(+). GTP hydrolase that promotes the GTP-dependent binding of aminoacyl-tRNA to the A-site of ribosomes during protein biosynthesis. This chain is Elongation factor Tu, found in Streptococcus pyogenes serotype M1.